Here is a 122-residue protein sequence, read N- to C-terminus: Small ribosomal subunit protein uS13 (122 aa).

A disordered region spans residues 95–122; sequence GLPVRGQRTHTNARTRKGPAKPIAGKKK.

Belongs to the universal ribosomal protein uS13 family. Part of the 30S ribosomal subunit. Forms a loose heterodimer with protein S19. Forms two bridges to the 50S subunit in the 70S ribosome.

In terms of biological role, located at the top of the head of the 30S subunit, it contacts several helices of the 16S rRNA. In the 70S ribosome it contacts the 23S rRNA (bridge B1a) and protein L5 of the 50S subunit (bridge B1b), connecting the 2 subunits; these bridges are implicated in subunit movement. Contacts the tRNAs in the A and P-sites. This Caulobacter vibrioides (strain ATCC 19089 / CIP 103742 / CB 15) (Caulobacter crescentus) protein is Small ribosomal subunit protein uS13.